The following is a 230-amino-acid chain: NEDD8-conjugating enzyme Ubc12 (230 aa).

The segment at 1–87 (MFRLKELQKK…AELRAQKDID (87 aa)) is disordered. The span at 10 to 20 (KQQQQQQQQQQ) shows a compositional bias: low complexity. Positions 26–36 (TNGTDAVTTEP) are enriched in polar residues. The span at 37–57 (TDVKRQNSNDLKEIRKQKSKD) shows a compositional bias: basic and acidic residues. Residues 61–70 (SLKTKQSSES) show a composition bias toward polar residues. Residues 77-221 (PAELRAQKDI…VRQSLRGGYI (145 aa)) form the UBC core domain. Cys159 functions as the Glycyl thioester intermediate in the catalytic mechanism.

This sequence belongs to the ubiquitin-conjugating enzyme family. UBC12 subfamily.

It catalyses the reaction [E1 NEDD8-activating enzyme]-S-[NEDD8 protein]-yl-L-cysteine + [E2 NEDD8-conjugating enzyme]-L-cysteine = [E1 NEDD8-activating enzyme]-L-cysteine + [E2 NEDD8-conjugating enzyme]-S-[NEDD8-protein]-yl-L-cysteine.. It participates in protein modification; protein neddylation. Functionally, accepts the ubiquitin-like protein nedd8 from the uba3-nae1 E1 complex and catalyzes its covalent attachment to other proteins. The polypeptide is NEDD8-conjugating enzyme Ubc12 (ube2m) (Dictyostelium discoideum (Social amoeba)).